The primary structure comprises 160 residues: uncharacterized protein (160 aa).

Positions Met1 to Ala29 are cleaved as a signal peptide.

This is an uncharacterized protein from Sinorhizobium fredii (strain NBRC 101917 / NGR234).